The sequence spans 124 residues: 5-hydroxyisourate hydrolase (124 aa).

Substrate contacts are provided by histidine 15, arginine 53, and tyrosine 121.

Belongs to the transthyretin family. 5-hydroxyisourate hydrolase subfamily. As to quaternary structure, homotetramer.

It catalyses the reaction 5-hydroxyisourate + H2O = 5-hydroxy-2-oxo-4-ureido-2,5-dihydro-1H-imidazole-5-carboxylate + H(+). In terms of biological role, catalyzes the hydrolysis of 5-hydroxyisourate (HIU) to 2-oxo-4-hydroxy-4-carboxy-5-ureidoimidazoline (OHCU). The polypeptide is 5-hydroxyisourate hydrolase (Mesorhizobium japonicum (strain LMG 29417 / CECT 9101 / MAFF 303099) (Mesorhizobium loti (strain MAFF 303099))).